The chain runs to 971 residues: Sodium/calcium exchanger 1 (971 aa).

The N-terminal stretch at Met-1 to Ala-32 is a signal peptide. The Extracellular portion of the chain corresponds to Asp-33 to Lys-71. Asn-41 is a glycosylation site (N-linked (GlcNAc...) asparagine). The chain crosses the membrane as a helical span at residues Ile-72–Ile-92. Residues Ala-93 to Asn-133 are Cytoplasmic-facing. A helical transmembrane segment spans residues Leu-134 to Cys-154. The Alpha-1 repeat unit spans residues Ala-138–Ile-178. The Extracellular segment spans residues Gly-155–Thr-167. N-linked (GlcNAc...) asparagine glycosylation is present at Asn-157. Residues Ile-168–Pro-188 traverse the membrane as a helical segment. Residues Asp-189–Phe-201 lie on the Cytoplasmic side of the membrane. Residues Phe-202–Ser-222 form a helical membrane-spanning segment. Residues Ser-223 to Glu-228 are Extracellular-facing. A helical membrane pass occupies residues Val-229–Ala-249. Residues Asp-250–Gly-798 are Cytoplasmic-facing. Positions Arg-251–Gly-270 are putative calmodulin-binding region. Phosphoserine occurs at positions 282 and 389. Calx-beta domains are found at residues Val-393–Ser-493 and Ala-524–Gly-624. Ca(2+)-binding residues include Glu-417, Asp-453, Asp-478, Asp-479, Ile-481, Glu-483, Glu-486, Asp-530, Asp-531, Asp-532, Glu-548, Asp-584, Asp-610, Glu-611, Glu-612, and Glu-716. Residues Trp-799–Leu-819 traverse the membrane as a helical segment. Residues Ala-820–His-822 are Extracellular-facing. Residues Phe-823 to Thr-843 traverse the membrane as a helical segment. One copy of the Alpha-2 repeat lies at Ala-840 to Val-876. The Cytoplasmic segment spans residues Ser-844–Asn-872. Residues Ala-873 to Ala-893 traverse the membrane as a helical segment. Residues Asn-894–Thr-904 are Extracellular-facing. The chain crosses the membrane as a helical span at residues Leu-905–Tyr-925. Residues Arg-926–Lys-942 are Cytoplasmic-facing. The helical transmembrane segment at Leu-943 to Glu-963 threads the bilayer. Residues Ala-964 to Phe-971 are Extracellular-facing.

Belongs to the Ca(2+):cation antiporter (CaCA) (TC 2.A.19) family. SLC8 subfamily. In terms of tissue distribution, detected in heart, brain cortex and hippocampus (at protein level). Cardiac sarcolemma or brain, and spleen. Expressed in all regions of the kidney, highest levels of expression in the distal convoluted tubule. Expressed throughout the CNS, in decreasing order of abundance in hippocampus, cortex, cerebellum, hypothalamus, midbrain and striatum. Expressed in numerous regions of the brain including multiple cortical layers, hippocampus, septal nuclei, thalamic nuclei, cerebellum, hypothalamus, olfactory bulb and brainstem. Also expressed in various regions of the spinal cord, ventricles and atria of the heart, lung, adrenals and kidney. Isoform 4 seems to be a predominant isoform in aorta, stomach, liver, and kidney.

It is found in the cell membrane. Its subcellular location is the cell projection. It localises to the dendrite. The catalysed reaction is Ca(2+)(in) + 3 Na(+)(out) = Ca(2+)(out) + 3 Na(+)(in). With respect to regulation, activated by micromolar levels of Ca(2+). Its activity is regulated as follows. Only active at low calcium concentrations. Not activated by PKC. Active at all calcium levels tested. Activated by PKC. With respect to regulation, only active at low calcium concentrations. Activated by PKC. Its function is as follows. Mediates the exchange of one Ca(2+) ion against three to four Na(+) ions across the cell membrane, and thereby contributes to the regulation of cytoplasmic Ca(2+) levels and Ca(2+)-dependent cellular processes. Contributes to Ca(2+) transport during excitation-contraction coupling in muscle. In a first phase, voltage-gated channels mediate the rapid increase of cytoplasmic Ca(2+) levels due to release of Ca(2+) stores from the endoplasmic reticulum. SLC8A1 mediates the export of Ca(2+) from the cell during the next phase, so that cytoplasmic Ca(2+) levels rapidly return to baseline. Required for normal embryonic heart development and the onset of heart contractions. This is Sodium/calcium exchanger 1 (Slc8a1) from Rattus norvegicus (Rat).